The sequence spans 489 residues: UDP-N-acetylmuramate--L-alanine ligase (489 aa).

128–134 (GTHGKTT) is an ATP binding site.

The protein belongs to the MurCDEF family.

It is found in the cytoplasm. It catalyses the reaction UDP-N-acetyl-alpha-D-muramate + L-alanine + ATP = UDP-N-acetyl-alpha-D-muramoyl-L-alanine + ADP + phosphate + H(+). It participates in cell wall biogenesis; peptidoglycan biosynthesis. In terms of biological role, cell wall formation. The sequence is that of UDP-N-acetylmuramate--L-alanine ligase from Shewanella halifaxensis (strain HAW-EB4).